We begin with the raw amino-acid sequence, 422 residues long: 5'-deoxyadenosine deaminase (422 aa).

Residues His57 and His59 each coordinate Zn(2+). The substrate site is built by Glu86 and His178. His205 provides a ligand contact to Zn(2+). Residues Glu208 and Asp294 each coordinate substrate. Asp294 serves as a coordination point for Zn(2+).

It belongs to the metallo-dependent hydrolases superfamily. MTA/SAH deaminase family. As to quaternary structure, homotetramer. It depends on Zn(2+) as a cofactor.

It catalyses the reaction 5'-deoxyadenosine + H2O + H(+) = 5'-deoxyinosine + NH4(+). It carries out the reaction S-adenosyl-L-homocysteine + H2O + H(+) = S-inosyl-L-homocysteine + NH4(+). The catalysed reaction is S-methyl-5'-thioadenosine + H2O + H(+) = S-methyl-5'-thioinosine + NH4(+). The enzyme catalyses adenosine + H2O + H(+) = inosine + NH4(+). The protein operates within amino-acid biosynthesis; S-adenosyl-L-methionine biosynthesis. Its function is as follows. Catalyzes the deamination of three SAM-derived enzymatic products, namely 5'-deoxyadenosine, S-adenosyl-L-homocysteine, and 5'-methylthioadenosine, to produce the inosine analogs. Can also deaminate adenosine. The preferred substrate for this enzyme is 5'-deoxyadenosine, but all these substrates are efficiently deaminated. Likely functions in a S-adenosyl-L-methionine (SAM) recycling pathway from S-adenosyl-L-homocysteine (SAH) produced from SAM-dependent methylation reactions. May also be involved in the recycling of 5'-deoxyadenosine, whereupon the 5'-deoxyribose moiety of 5'-deoxyinosine is further metabolized to deoxyhexoses used for the biosynthesis of aromatic amino acids in methanogens. The chain is 5'-deoxyadenosine deaminase from Methanococcus vannielii (strain ATCC 35089 / DSM 1224 / JCM 13029 / OCM 148 / SB).